A 473-amino-acid chain; its full sequence is Photosystem II CP43 reaction center protein (473 aa).

A propeptide spanning residues methionine 1–glutamate 14 is cleaved from the precursor. An N-acetylthreonine modification is found at threonine 15. Threonine 15 carries the post-translational modification Phosphothreonine. 5 helical membrane-spanning segments follow: residues leucine 69–alanine 93, leucine 134–asparagine 155, lysine 178–threonine 200, lysine 255–serine 275, and tryptophan 291–alanine 312. Glutamate 367 contacts [CaMn4O5] cluster. A helical membrane pass occupies residues arginine 447 to proline 471.

It belongs to the PsbB/PsbC family. PsbC subfamily. As to quaternary structure, PSII is composed of 1 copy each of membrane proteins PsbA, PsbB, PsbC, PsbD, PsbE, PsbF, PsbH, PsbI, PsbJ, PsbK, PsbL, PsbM, PsbT, PsbX, PsbY, PsbZ, Psb30/Ycf12, at least 3 peripheral proteins of the oxygen-evolving complex and a large number of cofactors. It forms dimeric complexes. The cofactor is Binds multiple chlorophylls and provides some of the ligands for the Ca-4Mn-5O cluster of the oxygen-evolving complex. It may also provide a ligand for a Cl- that is required for oxygen evolution. PSII binds additional chlorophylls, carotenoids and specific lipids..

It localises to the plastid. It is found in the chloroplast thylakoid membrane. Its function is as follows. One of the components of the core complex of photosystem II (PSII). It binds chlorophyll and helps catalyze the primary light-induced photochemical processes of PSII. PSII is a light-driven water:plastoquinone oxidoreductase, using light energy to abstract electrons from H(2)O, generating O(2) and a proton gradient subsequently used for ATP formation. The polypeptide is Photosystem II CP43 reaction center protein (Eucalyptus globulus subsp. globulus (Tasmanian blue gum)).